The following is an 83-amino-acid chain: Small ribosomal subunit protein bS16 (83 aa).

It belongs to the bacterial ribosomal protein bS16 family.

The polypeptide is Small ribosomal subunit protein bS16 (Acinetobacter baumannii (strain AB307-0294)).